Reading from the N-terminus, the 374-residue chain is Transaldolase (374 aa).

The active-site Schiff-base intermediate with substrate is Lys-140.

The protein belongs to the transaldolase family. Type 2 subfamily.

It is found in the cytoplasm. It catalyses the reaction D-sedoheptulose 7-phosphate + D-glyceraldehyde 3-phosphate = D-erythrose 4-phosphate + beta-D-fructose 6-phosphate. It participates in carbohydrate degradation; pentose phosphate pathway; D-glyceraldehyde 3-phosphate and beta-D-fructose 6-phosphate from D-ribose 5-phosphate and D-xylulose 5-phosphate (non-oxidative stage): step 2/3. Its function is as follows. Transaldolase is important for the balance of metabolites in the pentose-phosphate pathway. This is Transaldolase from Renibacterium salmoninarum (strain ATCC 33209 / DSM 20767 / JCM 11484 / NBRC 15589 / NCIMB 2235).